Here is a 320-residue protein sequence, read N- to C-terminus: 4-diphosphocytidyl-2-C-methyl-D-erythritol kinase (320 aa).

K20 is a catalytic residue. An ATP-binding site is contributed by 112–122 (PVAGGMGGGSA). Residue D154 is part of the active site.

It belongs to the GHMP kinase family. IspE subfamily.

It carries out the reaction 4-CDP-2-C-methyl-D-erythritol + ATP = 4-CDP-2-C-methyl-D-erythritol 2-phosphate + ADP + H(+). Its pathway is isoprenoid biosynthesis; isopentenyl diphosphate biosynthesis via DXP pathway; isopentenyl diphosphate from 1-deoxy-D-xylulose 5-phosphate: step 3/6. Functionally, catalyzes the phosphorylation of the position 2 hydroxy group of 4-diphosphocytidyl-2C-methyl-D-erythritol. In Pseudarthrobacter chlorophenolicus (strain ATCC 700700 / DSM 12829 / CIP 107037 / JCM 12360 / KCTC 9906 / NCIMB 13794 / A6) (Arthrobacter chlorophenolicus), this protein is 4-diphosphocytidyl-2-C-methyl-D-erythritol kinase.